Reading from the N-terminus, the 416-residue chain is Gamma-glutamyl phosphate reductase (416 aa).

Belongs to the gamma-glutamyl phosphate reductase family.

It localises to the cytoplasm. It carries out the reaction L-glutamate 5-semialdehyde + phosphate + NADP(+) = L-glutamyl 5-phosphate + NADPH + H(+). It participates in amino-acid biosynthesis; L-proline biosynthesis; L-glutamate 5-semialdehyde from L-glutamate: step 2/2. In terms of biological role, catalyzes the NADPH-dependent reduction of L-glutamate 5-phosphate into L-glutamate 5-semialdehyde and phosphate. The product spontaneously undergoes cyclization to form 1-pyrroline-5-carboxylate. This chain is Gamma-glutamyl phosphate reductase, found in Streptococcus pyogenes serotype M3 (strain ATCC BAA-595 / MGAS315).